The sequence spans 146 residues: Large ribosomal subunit protein uL15 (146 aa).

Basic and acidic residues predominate over residues 1–13 (MKLHELYPAEGSR). The interval 1–55 (MKLHELYPAEGSRKVRNRVGRGAATGNGKTSGRGQKGQKARSGGKVRPGFEGGQL) is disordered. Over residues 23-35 (AATGNGKTSGRGQ) the composition is skewed to gly residues.

Belongs to the universal ribosomal protein uL15 family. As to quaternary structure, part of the 50S ribosomal subunit.

Binds to the 23S rRNA. This is Large ribosomal subunit protein uL15 from Staphylococcus carnosus (strain TM300).